A 131-amino-acid chain; its full sequence is Snaclec coagulation factor IX/factor X-binding protein subunit A (131 aa).

The 131-residue stretch at Asp-1–Ile-131 folds into the C-type lectin domain. 3 cysteine pairs are disulfide-bonded: Cys-2-Cys-13, Cys-30-Cys-129, and Cys-104-Cys-121. Ser-41, Glu-43, and Glu-47 together coordinate Ca(2+). Residue Glu-130 coordinates Ca(2+).

Belongs to the snaclec family. Heterodimer of subunits A and B; disulfide-linked. Expressed by the venom gland.

The protein resides in the secreted. Its function is as follows. Anticoagulant protein which binds to coagulation factor IX (F9) and coagulation factor X (F10) in the presence of calcium. It may bind the gamma-carboxyglutamic acid-domain regions of factors with a 1 to 1 stoichiometry. The dissociation constant (K(d)) are 6.6 nM for factor IX (F9) and 125 nM for factor X (F10). Does not bind carbohydrates. The chain is Snaclec coagulation factor IX/factor X-binding protein subunit A from Echis carinatus (Saw-scaled viper).